A 104-amino-acid polypeptide reads, in one-letter code: PLAT domain-containing protein 3 (104 aa).

In terms of domain architecture, PLAT spans 1–104; sequence MSLRLYDSYG…LARDASPYEL (104 aa).

The sequence is that of PLAT domain-containing protein 3 from Arabidopsis thaliana (Mouse-ear cress).